The following is a 1147-amino-acid chain: Nitric oxide synthase, inducible (1147 aa).

Residues K22–N51 are disordered. Residues D23–N27 carry the DINNN-motif; mediates interaction with SPSB1, SPSB2 and SPSB4 motif. 2 residues coordinate Zn(2+): C107 and C112. S115 lines the (6R)-L-erythro-5,6,7,8-tetrahydrobiopterin pocket. C197 contacts heme b. Residues Q260, W369, Y370, and E374 each coordinate L-arginine. R378, I459, W460, and F473 together coordinate (6R)-L-erythro-5,6,7,8-tetrahydrobiopterin. Position 488 (Y488) interacts with heme b. The segment at F512–S532 is calmodulin-binding. A Flavodoxin-like domain is found at A536–F674. Positions 542, 543, 544, 546, and 547 each coordinate FMN. Residue T564 is modified to Phosphothreonine. Y572 is modified (phosphotyrosine). FMN-binding residues include S588, T589, S625, C632, E658, and Q662. The FAD-binding FR-type domain maps to K727–P967. R747 contacts NADP(+). Residues H769, R903, Y905, S906, T921, and A923 each contribute to the FAD site. An NADP(+)-binding site is contributed by T926. Positions 927, 940, 941, and 942 each coordinate FAD. 8 residues coordinate NADP(+): T981, R1014, S1043, R1044, K1050, Y1052, Q1054, and D1087.

The protein belongs to the NOS family. In terms of assembly, homodimer. Interacts with NHERF1. Interacts with GAPDH; induced by oxidatively-modified low-densitity lipoprotein (LDL(ox)). Interacts with S100A8 and S100A9 to form the iNOS-S100A8/9 transnitrosylase complex. Interacts with SPSB1, SPSB2 and SPSB4. Interacts with ELOC and CUL5 in the presence of SPSB1 or SPSB2 or SPSB4. Forms a complex with ASL, ASS1 and HSP90AA1; the complex regulates cell-autonomous L-arginine synthesis and citrulline recycling while channeling extracellular L-arginine to nitric oxide synthesis pathway. Requires heme b as cofactor. FAD serves as cofactor. FMN is required as a cofactor. The cofactor is (6R)-L-erythro-5,6,7,8-tetrahydrobiopterin. Post-translationally, polyubiquitinated; mediated by SPSB1, SPSB2 and SPSB4, leading to proteasomal degradation. In terms of tissue distribution, in normal kidney, expressed primarily in the medullary thick ascending limb, with minor amounts in the medullary collecting duct and vasa recta bundle.

The protein resides in the cytoplasm. It is found in the cytosol. It catalyses the reaction 2 L-arginine + 3 NADPH + 4 O2 + H(+) = 2 L-citrulline + 2 nitric oxide + 3 NADP(+) + 4 H2O. Its activity is regulated as follows. Not stimulated by calcium/calmodulin. Aspirin inhibits expression and function of this enzyme and effects may be exerted at the level of translational/post-translational modification and directly on the catalytic activity. Functionally, produces nitric oxide (NO) which is a messenger molecule with diverse functions throughout the body. In macrophages, NO mediates tumoricidal and bactericidal actions. Also has nitrosylase activity and mediates cysteine S-nitrosylation of cytoplasmic target proteins such PTGS2/COX2. As component of the iNOS-S100A8/9 transnitrosylase complex involved in the selective inflammatory stimulus-dependent S-nitrosylation of GAPDH implicated in regulation of the GAIT complex activity and probably multiple targets including ANXA5, EZR, MSN and VIM. Involved in inflammation, enhances the synthesis of pro-inflammatory mediators such as IL6 and IL8. The sequence is that of Nitric oxide synthase, inducible (Nos2) from Rattus norvegicus (Rat).